A 1013-amino-acid chain; its full sequence is Retinoblastoma-related protein 1 (1013 aa).

Residues 406-607 (TPVSTAMTTA…EKGSSMYNSL (202 aa)) are domain A. Residues 406-858 (TPVSTAMTTA…NEIFIPAVKP (453 aa)) form a pocket region. The segment at 608 to 727 (IVARPSLALE…PGGGGETCAE (120 aa)) is spacer. Positions 728–858 (TGINIFFTKI…NEIFIPAVKP (131 aa)) are domain B. 2 positions are modified to phosphoserine: serine 885 and serine 898. Residues 979–1013 (VANSLNLQNQNQNQNGSDASSSGGAAPLKTEPTDS) are disordered. Low complexity predominate over residues 980–1004 (ANSLNLQNQNQNQNGSDASSSGGAA).

It belongs to the retinoblastoma protein (RB) family. As to quaternary structure, interacts with the begomovirus replication-associated protein (Rep), the nanovirus Clink protein, the mastrevirus RepA protein, E2FA, E2FB and E2FC. Interacts with MSI1 through its Domain A. Interacts with ATPK1/S6K1. Interacts with SCR. Interacts with HAT2. Interacts with FAMA. Interacts with MYB124 and MYB88. Component of a DREAM-like complex which modulates a variety of developmentally regulated genes and of the mitotic genes in proliferating and differentiated cells. Associates with MYB3R3 in both earlier and later stages of leaves development. Interacts with MYB3R4 only at early stages of leaves development. Highly phosphorylated by CDKA-1 during G1 to S phase transition. Once hyper-phosphorylated, becomes inactive and unable to interact with E2F. Post-translationally, ubiquitinated. Subject to proteasome-dependent degradation during sucrose starvation. Expressed in actively dividing cells. Detected in the shoot apical meristem, in young leaf primordia and in both sporophytic tissue and the megagametophyte.

It is found in the nucleus. Its function is as follows. Key regulator of entry into cell division. Acts as a transcription repressor of E2F target genes, whose activity is required for progress from the G1 to the S phase of the cell cycle. Hyperphosphorylation by CDKA-1 prevents the binding to E2F transcription factors, allowing G1 to S phase transition to operate. Forms a stable complex with E2FA that functions in maintaining cell proliferation through repression of cell differentiation. Plays a central role in the mechanism controlling meristem cell differentiation, cell fate establishment and cell fate maintenance during organogenesis and gametogenesis. Required during lateral organ production. Also involved in controlling asymmetric divisions of stem cells in different stem cell niches. Acts as a negative regulator of cell proliferation during leaf and gametophytes development. At later stages of development, restricts the progression through additional endocycles. In the leaf, plays a role in the control of the mesophyll differentiation. Another role is its implication in the regulation of imprinted genes. Acts together with MSI1 to repress the expression of MET1 during gametogenesis. This in turn activates expression of the imprinted genes FIS2 and FWA. Regulates many genes of the polycomb repressive complex 2 (PRC2). Plays an important role in meiosis affecting different aspects of this complex process. Functions as a positive regulator of the developmental switch from embryonic heterotrophic growth to autotrophic growth. Interaction with mastrevirus RepA or nanovirus Clink protein disrupts the RBR/E2F interaction and releases the transcription of replicative enzymes needed by the virus by increasing the E2F DNA-binding activity. This Arabidopsis thaliana (Mouse-ear cress) protein is Retinoblastoma-related protein 1 (RBR1).